A 207-amino-acid polypeptide reads, in one-letter code: Uracil phosphoribosyltransferase (207 aa).

5-phospho-alpha-D-ribose 1-diphosphate-binding positions include arginine 77, arginine 102, and 129–137; that span reads DPMLATGGS. Uracil-binding positions include isoleucine 192 and 197–199; that span reads GDA. Aspartate 198 contributes to the 5-phospho-alpha-D-ribose 1-diphosphate binding site.

It belongs to the UPRTase family. Mg(2+) is required as a cofactor.

The catalysed reaction is UMP + diphosphate = 5-phospho-alpha-D-ribose 1-diphosphate + uracil. Its pathway is pyrimidine metabolism; UMP biosynthesis via salvage pathway; UMP from uracil: step 1/1. Its activity is regulated as follows. Allosterically activated by GTP. Functionally, catalyzes the conversion of uracil and 5-phospho-alpha-D-ribose 1-diphosphate (PRPP) to UMP and diphosphate. This Mycoplasma capricolum subsp. capricolum (strain California kid / ATCC 27343 / NCTC 10154) protein is Uracil phosphoribosyltransferase.